A 107-amino-acid chain; its full sequence is DNA-directed RNA polymerase subunit omega (107 aa).

This sequence belongs to the RNA polymerase subunit omega family. In terms of assembly, the RNAP catalytic core consists of 2 alpha, 1 beta, 1 beta' and 1 omega subunit. When a sigma factor is associated with the core the holoenzyme is formed, which can initiate transcription.

The enzyme catalyses RNA(n) + a ribonucleoside 5'-triphosphate = RNA(n+1) + diphosphate. In terms of biological role, promotes RNA polymerase assembly. Latches the N- and C-terminal regions of the beta' subunit thereby facilitating its interaction with the beta and alpha subunits. The sequence is that of DNA-directed RNA polymerase subunit omega from Mycolicibacterium smegmatis (strain ATCC 700084 / mc(2)155) (Mycobacterium smegmatis).